Here is a 110-residue protein sequence, read N- to C-terminus: Large ribosomal subunit protein uL22 (110 aa).

Belongs to the universal ribosomal protein uL22 family. Part of the 50S ribosomal subunit.

Functionally, this protein binds specifically to 23S rRNA; its binding is stimulated by other ribosomal proteins, e.g. L4, L17, and L20. It is important during the early stages of 50S assembly. It makes multiple contacts with different domains of the 23S rRNA in the assembled 50S subunit and ribosome. In terms of biological role, the globular domain of the protein is located near the polypeptide exit tunnel on the outside of the subunit, while an extended beta-hairpin is found that lines the wall of the exit tunnel in the center of the 70S ribosome. The protein is Large ribosomal subunit protein uL22 of Cellvibrio japonicus (strain Ueda107) (Pseudomonas fluorescens subsp. cellulosa).